The following is a 466-amino-acid chain: SAGFKAGVKDYRLTYYTPDYETKDTDILAAFRVTPQPGVPAEEAGAAVAAESSTGTWTTVWTDGLTSLDRYKGRCYHIEAVVGEENQYIAYVAYPLDLFEEGSVTNMFTSIVGNVFGFKALRALRLEDLRIPPSYSKTFQGPPHGIQVERDKLNKYGRPLLGCTIKPKLGLSAKNYGRAVYECLRGGLDFTKDDENVNSQPFMRWRDRFLFCAEAIYKAQAETGEIKGHYLNATAGTCEEMIKRAVFARELGVPIVMHDYLTGGFTANTTLAHYCRDNGLLLHIHRAMHAVIDRQKNHGMHFRVLAKALRMSGGDHIHAGTVVGELEGEREMTLGFVDLLRDDYIEKDRSRGIFFTQDWVSMPGVLPVASGGIHVWHMPALTEIFGDDSVLQFGGGTLGHPWGNAPGAVANRVALEACVQARNEGRDLAREGNEIIREACNWSPELAAACEVWKEIKFEFEPVDKT.

At Lys5 the chain carries N6,N6,N6-trimethyllysine. 2 residues coordinate substrate: Asn114 and Thr164. Lys166 (proton acceptor) is an active-site residue. Lys168 serves as a coordination point for substrate. Residues Lys192, Asp194, and Glu195 each contribute to the Mg(2+) site. Lys192 carries the N6-carboxylysine modification. Catalysis depends on His285, which acts as the Proton acceptor. Substrate contacts are provided by Arg286, His318, and Ser370.

It belongs to the RuBisCO large chain family. Type I subfamily. In terms of assembly, heterohexadecamer of 8 large chains and 8 small chains; disulfide-linked. The disulfide link is formed within the large subunit homodimers. Requires Mg(2+) as cofactor. The disulfide bond which can form in the large chain dimeric partners within the hexadecamer appears to be associated with oxidative stress and protein turnover.

The protein localises to the plastid. It is found in the chloroplast. It catalyses the reaction 2 (2R)-3-phosphoglycerate + 2 H(+) = D-ribulose 1,5-bisphosphate + CO2 + H2O. The enzyme catalyses D-ribulose 1,5-bisphosphate + O2 = 2-phosphoglycolate + (2R)-3-phosphoglycerate + 2 H(+). RuBisCO catalyzes two reactions: the carboxylation of D-ribulose 1,5-bisphosphate, the primary event in carbon dioxide fixation, as well as the oxidative fragmentation of the pentose substrate in the photorespiration process. Both reactions occur simultaneously and in competition at the same active site. This Isophysis tasmanica protein is Ribulose bisphosphate carboxylase large chain.